The sequence spans 271 residues: MPELPEVEVTRRSFAGAIEGATVRGITVGKPLRWPLGTEPAVLVGRRVCGVRRRGKYLLLDLDEGLLLIHLGMSGSLRFARDLPARGAHDHFELITDQGTLRLHDPRRFGAVVWAAGESDPRARKLLDGWGLEPLGEDFAFETFHAGLRAKRTPIKQLLLAGTVVVGVGNIYACEVLFLAGIRPTTRACAIGPQRARRLHGAIREVLARAVERGGSTLRDFSSADGSAGHFQLEANVYGRAGLPCRQCGTPVRLLRQGQRSTYFCPHCQRA.

Proline 2 serves as the catalytic Schiff-base intermediate with DNA. The active-site Proton donor is glutamate 3. Lysine 56 (proton donor; for beta-elimination activity) is an active-site residue. The DNA site is built by histidine 89, arginine 107, and lysine 151. The FPG-type zinc finger occupies 236-270 (NVYGRAGLPCRQCGTPVRLLRQGQRSTYFCPHCQR). Arginine 260 functions as the Proton donor; for delta-elimination activity in the catalytic mechanism.

Belongs to the FPG family. In terms of assembly, monomer. It depends on Zn(2+) as a cofactor.

The catalysed reaction is Hydrolysis of DNA containing ring-opened 7-methylguanine residues, releasing 2,6-diamino-4-hydroxy-5-(N-methyl)formamidopyrimidine.. It catalyses the reaction 2'-deoxyribonucleotide-(2'-deoxyribose 5'-phosphate)-2'-deoxyribonucleotide-DNA = a 3'-end 2'-deoxyribonucleotide-(2,3-dehydro-2,3-deoxyribose 5'-phosphate)-DNA + a 5'-end 5'-phospho-2'-deoxyribonucleoside-DNA + H(+). In terms of biological role, involved in base excision repair of DNA damaged by oxidation or by mutagenic agents. Acts as a DNA glycosylase that recognizes and removes damaged bases. Has a preference for oxidized purines, such as 7,8-dihydro-8-oxoguanine (8-oxoG). Has AP (apurinic/apyrimidinic) lyase activity and introduces nicks in the DNA strand. Cleaves the DNA backbone by beta-delta elimination to generate a single-strand break at the site of the removed base with both 3'- and 5'-phosphates. This chain is Formamidopyrimidine-DNA glycosylase, found in Acidovorax sp. (strain JS42).